Consider the following 947-residue polypeptide: DEAD-box ATP-dependent RNA helicase 45 (947 aa).

The segment covering 1–14 has biased composition (acidic residues); it reads MEEEEVVVVVDEEE. Disordered regions lie at residues 1 to 132 and 159 to 221; these read MEEE…EDEI and SMPA…EEFM. 2 stretches are compositionally biased toward basic and acidic residues: residues 15 to 31 and 42 to 61; these read SERR…KRLD and KEWQ…REQE. The segment covering 62-82 has biased composition (low complexity); the sequence is AAAGAGTPAAAAGADGDSNAG. Acidic residues-rich tracts occupy residues 88 to 108 and 196 to 219; these read DGEE…EDDG and DDSD…DDEE. Positions 285-313 match the Q motif motif; it reads KTWVQSGLTSKLLDTIKKLGFEKPMPIQA. The Helicase ATP-binding domain maps to 316–494; sequence LPIIMSGRDC…RKVLTKPVEI (179 aa). 329–336 contributes to the ATP binding site; that stretch reads AKTGSGKT. The DEAD box signature appears at 442–445; the sequence is DEAD. Residues 479–647 enclose the Helicase C-terminal domain; it reads QVEILARKVL…AVPQDLKGLA (169 aa). The disordered stretch occupies residues 658–710; the sequence is TEQAHGTGYGGSGFKFNEEEDEARRSAKKAQAREYGYEEDKSDSDSDEEGGVR. A compositionally biased stretch (acidic residues) spans 697–706; it reads DKSDSDSDEE. Positions 854 to 879 form a coiled coil; sequence TELSVKKAKSELKRVLEDCANHALNL.

The protein belongs to the DEAD box helicase family. DDX46/PRP5 subfamily.

The enzyme catalyses ATP + H2O = ADP + phosphate + H(+). This is DEAD-box ATP-dependent RNA helicase 45 from Oryza sativa subsp. japonica (Rice).